The following is a 371-amino-acid chain: Queuine tRNA-ribosyltransferase (371 aa).

The active-site Proton acceptor is the Asp-93. Substrate is bound by residues 93 to 97 (DSGGF), Asp-147, Gln-191, and Gly-218. The segment at 249–255 (GVGTPLD) is RNA binding. The active-site Nucleophile is Asp-268. Positions 273–277 (TRNAR) are RNA binding; important for wobble base 34 recognition. Residues Cys-306, Cys-308, Cys-311, and His-337 each contribute to the Zn(2+) site.

The protein belongs to the queuine tRNA-ribosyltransferase family. Homodimer. Within each dimer, one monomer is responsible for RNA recognition and catalysis, while the other monomer binds to the replacement base PreQ1. Zn(2+) is required as a cofactor.

It carries out the reaction 7-aminomethyl-7-carbaguanine + guanosine(34) in tRNA = 7-aminomethyl-7-carbaguanosine(34) in tRNA + guanine. It functions in the pathway tRNA modification; tRNA-queuosine biosynthesis. In terms of biological role, catalyzes the base-exchange of a guanine (G) residue with the queuine precursor 7-aminomethyl-7-deazaguanine (PreQ1) at position 34 (anticodon wobble position) in tRNAs with GU(N) anticodons (tRNA-Asp, -Asn, -His and -Tyr). Catalysis occurs through a double-displacement mechanism. The nucleophile active site attacks the C1' of nucleotide 34 to detach the guanine base from the RNA, forming a covalent enzyme-RNA intermediate. The proton acceptor active site deprotonates the incoming PreQ1, allowing a nucleophilic attack on the C1' of the ribose to form the product. After dissociation, two additional enzymatic reactions on the tRNA convert PreQ1 to queuine (Q), resulting in the hypermodified nucleoside queuosine (7-(((4,5-cis-dihydroxy-2-cyclopenten-1-yl)amino)methyl)-7-deazaguanosine). The protein is Queuine tRNA-ribosyltransferase of Lawsonia intracellularis (strain PHE/MN1-00).